A 119-amino-acid chain; its full sequence is Ghilanten (119 aa).

At Q1 the chain carries Pyrrolidone carboxylic acid. Cystine bridges form between C8–C19, C13–C26, C28–C48, C33–C51, C37–C53, C62–C73, C67–C80, C82–C103, C88–C106, and C92–C108. The Antistasin-like 1 domain occupies 28 to 53; that stretch reads CPEVRCRVYCSHGFQRSRYGCEVCRC. The region spanning 83 to 108 is the Antistasin-like 2 domain; the sequence is KIDINCRKTCPNGLKRDKLGCEYCEC. Heparin contacts are provided by residues 97 to 100 and 111 to 118; these read KRDK and KRKLVPRL.

This sequence belongs to the protease inhibitor I15 (antistasin) family.

The protein localises to the secreted. Its function is as follows. This highly disulfide-bonded protein is a potent inhibitor of factor Xa. May have therapeutic utility as an anticoagulant. Also exhibits a strong metastatic activity. The protein is Ghilanten of Haementeria ghilianii (Amazon leech).